The chain runs to 178 residues: Caveolin-1 (178 aa).

S2 carries the post-translational modification N-acetylserine. At S2 the chain carries Phosphoserine. Positions 2-94 (SGGKYVDSEG…WKASFTTFTV (93 aa)) are required for homooligomerization. Over 2 to 104 (SGGKYVDSEG…TKYWFYRLLS (103 aa)) the chain is Cytoplasmic. K5 carries the N6-acetyllysine; alternate modification. Residue K5 forms a Glycyl lysine isopeptide (Lys-Gly) (interchain with G-Cter in ubiquitin); alternate linkage. Position 6 is a phosphotyrosine (Y6). A Phosphoserine modification is found at S9. The residue at position 14 (Y14) is a Phosphotyrosine; by ABL1. Phosphotyrosine is present on Y25. Residues K26 and K30 each participate in a glycyl lysine isopeptide (Lys-Gly) (interchain with G-Cter in ubiquitin) cross-link. Residue S37 is modified to Phosphoserine. Residues K39, K47, and K57 each participate in a glycyl lysine isopeptide (Lys-Gly) (interchain with G-Cter in ubiquitin) cross-link. The segment at 82–94 (DGIWKASFTTFTV) is interaction with CAVIN3. The segment at residues 105–125 (ALFGIPMALIWGIYFAILSFL) is an intramembrane region (helical). The Cytoplasmic portion of the chain corresponds to 126–178 (HIWAVVPCIKSFLIEIQCISRVYSIYIHTVCDPLFEAIGKIFSNVRIGLQKEI). The interacts with SPRY1, SPRY2, SPRY3 and SPRY4 stretch occupies residues 131-142 (VPCIKSFLIEIQ). Residues C133, C143, and C156 are each lipidated (S-palmitoyl cysteine). Residues 149–160 (SIYIHTVCDPLF) form an interacts with SPRY1, SPRY2, and SPRY4 region. The tract at residues 167-178 (FSNVRIGLQKEI) is interacts with SPRY1, SPRY2, SPRY3 and SPRY4.

The protein belongs to the caveolin family. In terms of assembly, homooligomer. Interacts with GLIPR2. Interacts with NOSTRIN. Interacts with SNAP25 and STX1A. Interacts (via the N-terminus) with DPP4; the interaction is direct. Interacts with CTNNB1, CDH1 and JUP. Interacts with PACSIN2; this interaction induces membrane tubulation. Interacts with SLC7A9. Interacts with BMX and BTK. Interacts with TGFBR1. Interacts with CAVIN3 (via leucine-zipper domain) in a cholesterol-sensitive manner. Interacts with CAVIN1. Interacts with EHD2 in a cholesterol-dependent manner. Forms a ternary complex with UBXN6 and VCP; mediates CAV1 targeting to lysosomes for degradation. Interacts with ABCG1; this interaction regulates ABCG1-mediated cholesterol efflux. Interacts with NEU3; this interaction enhances NEU3 sialidase activity within caveola. Interacts (via C-terminus) with SPRY1, SPRY2 (via C-terminus), SPRY3, and SPRY4. Interacts with IGFBP5; this interaction allows trafficking of IGFBP5 from the plasma membrane to the nucleus. Phosphorylated at Tyr-14 by ABL1 in response to oxidative stress. Post-translationally, ubiquitinated. Undergo monoubiquitination and multi- and/or polyubiquitination. Monoubiquitination of N-terminal lysines promotes integration in a ternary complex with UBXN6 and VCP which promotes oligomeric CAV1 targeting to lysosomes for degradation. Ubiquitinated by ZNRF1; leading to degradation and modulation of the TLR4-mediated immune response.

It is found in the golgi apparatus membrane. Its subcellular location is the cell membrane. The protein localises to the membrane. It localises to the caveola. The protein resides in the membrane raft. May act as a scaffolding protein within caveolar membranes. Forms a stable heterooligomeric complex with CAV2 that targets to lipid rafts and drives caveolae formation. Mediates the recruitment of CAVIN proteins (CAVIN1/2/3/4) to the caveolae. Interacts directly with G-protein alpha subunits and can functionally regulate their activity. Involved in the costimulatory signal essential for T-cell receptor (TCR)-mediated T-cell activation. Its binding to DPP4 induces T-cell proliferation and NF-kappa-B activation in a T-cell receptor/CD3-dependent manner. Recruits CTNNB1 to caveolar membranes and may regulate CTNNB1-mediated signaling through the Wnt pathway. Negatively regulates TGFB1-mediated activation of SMAD2/3 by mediating the internalization of TGFBR1 from membrane rafts leading to its subsequent degradation. Binds 20(S)-hydroxycholesterol (20(S)-OHC). The sequence is that of Caveolin-1 (CAV1) from Saimiri boliviensis boliviensis (Bolivian squirrel monkey).